The sequence spans 441 residues: Ribosomal protein uS12 methylthiotransferase RimO (441 aa).

The 111-residue stretch at 8-118 (PKIGFVSLGC…VLQHVHHYVP (111 aa)) folds into the MTTase N-terminal domain. Positions 17, 53, 82, 150, 154, and 157 each coordinate [4Fe-4S] cluster. The Radical SAM core domain maps to 136–373 (LTPRHYAYLK…MALQQQISAE (238 aa)). The region spanning 376 to 441 (QEKVGREILV…DEYDLWGSLV (66 aa)) is the TRAM domain.

The protein belongs to the methylthiotransferase family. RimO subfamily. [4Fe-4S] cluster is required as a cofactor.

Its subcellular location is the cytoplasm. The catalysed reaction is L-aspartate(89)-[ribosomal protein uS12]-hydrogen + (sulfur carrier)-SH + AH2 + 2 S-adenosyl-L-methionine = 3-methylsulfanyl-L-aspartate(89)-[ribosomal protein uS12]-hydrogen + (sulfur carrier)-H + 5'-deoxyadenosine + L-methionine + A + S-adenosyl-L-homocysteine + 2 H(+). Functionally, catalyzes the methylthiolation of an aspartic acid residue of ribosomal protein uS12. This Cronobacter sakazakii (strain ATCC BAA-894) (Enterobacter sakazakii) protein is Ribosomal protein uS12 methylthiotransferase RimO.